We begin with the raw amino-acid sequence, 258 residues long: Acyl-[acyl-carrier-protein]--UDP-N-acetylglucosamine O-acyltransferase (258 aa).

Belongs to the transferase hexapeptide repeat family. LpxA subfamily. Homotrimer.

It localises to the cytoplasm. It catalyses the reaction a (3R)-hydroxyacyl-[ACP] + UDP-N-acetyl-alpha-D-glucosamine = a UDP-3-O-[(3R)-3-hydroxyacyl]-N-acetyl-alpha-D-glucosamine + holo-[ACP]. Its pathway is glycolipid biosynthesis; lipid IV(A) biosynthesis; lipid IV(A) from (3R)-3-hydroxytetradecanoyl-[acyl-carrier-protein] and UDP-N-acetyl-alpha-D-glucosamine: step 1/6. Functionally, involved in the biosynthesis of lipid A, a phosphorylated glycolipid that anchors the lipopolysaccharide to the outer membrane of the cell. This chain is Acyl-[acyl-carrier-protein]--UDP-N-acetylglucosamine O-acyltransferase, found in Pseudomonas putida (strain W619).